A 125-amino-acid chain; its full sequence is UPF0231 protein in hemN 3'region (125 aa).

This sequence belongs to the UPF0231 family.

The sequence is that of UPF0231 protein in hemN 3'region from Mannheimia haemolytica (Pasteurella haemolytica).